Reading from the N-terminus, the 351-residue chain is Adenine deaminase (351 aa).

Zn(2+) contacts are provided by His-19, His-21, and His-208. The active-site Proton donor is Glu-211. Asp-288 provides a ligand contact to Zn(2+). Asp-289 is a binding site for substrate.

This sequence belongs to the metallo-dependent hydrolases superfamily. Adenosine and AMP deaminases family. Adenine deaminase type 2 subfamily. The cofactor is Zn(2+).

The protein resides in the cytoplasm. It is found in the nucleus. The enzyme catalyses adenine + H2O + H(+) = hypoxanthine + NH4(+). Catalyzes the hydrolytic deamination of adenine to hypoxanthine. Plays an important role in the purine salvage pathway and in nitrogen catabolism. This chain is Adenine deaminase (aah1), found in Aspergillus oryzae (strain ATCC 42149 / RIB 40) (Yellow koji mold).